Consider the following 398-residue polypeptide: RNA-binding protein rnc1 (398 aa).

The tract at residues 40 to 78 (KVSIPTPKPSTPLSTLTNGSTIQQSMTNQPEPTSQVPPI) is disordered. Residue threonine 50 is modified to Phosphothreonine. A compositionally biased stretch (polar residues) spans 57–76 (NGSTIQQSMTNQPEPTSQVP). 2 consecutive KH domains span residues 93–157 (QLTL…YRFI) and 178–243 (PRKL…IWEI). Residues 274–290 (ASTASPQQVSPPAAPST) are compositionally biased toward low complexity. The segment at 274–295 (ASTASPQQVSPPAAPSTTSGEA) is disordered. Residues 320-385 (KVTQNISIPA…EENEKALFLL (66 aa)) enclose the KH 3 domain.

Phosphorylated by pmk1. Phosphorylation causes enhancement of the RNA-binding activity.

It localises to the cytoplasm. Functionally, binds and stabilizes pmp1 mRNA and hence acts as a negative regulator of pmk1 signaling. Overexpression suppresses the Cl(-) sensitivity of calcineurin deletion. This is RNA-binding protein rnc1 from Schizosaccharomyces pombe (strain 972 / ATCC 24843) (Fission yeast).